A 368-amino-acid chain; its full sequence is UDP-galactose/UDP-N-acetylglucosamine transporter srf-3 (368 aa).

The next 8 membrane-spanning stretches (helical) occupy residues 72–92 (FVST…CLFL), 118–138 (LKVC…YVAA), 145–165 (TFMI…VIIL), 174–194 (WFAL…GTKA), 203–223 (FVGF…GIYF), 235–254 (LWMR…FSAI), 273–293 (SIVW…AVCI), and 317–337 (IFLF…LVIF).

Belongs to the nucleotide-sugar transporter family. SLC35A subfamily. In terms of tissue distribution, expressed exclusively in pharyngeal cells g1 and g2, lateral seam cells, spermatheca and vas deferens.

The protein resides in the golgi apparatus membrane. Acts as a transporter of both UDP-galactose and UDP-N-acetylglucosamine into the Golgi lumen. Apparently transports UDP-galactose and UDP-N-acetylglucosamine simultaneously, and independently, by an unknown mechanism. Functions redundantly with nucleotide sugar transporter nstp-4. May be involved in gonadal development. In Caenorhabditis elegans, this protein is UDP-galactose/UDP-N-acetylglucosamine transporter srf-3 (srf-3).